Consider the following 559-residue polypeptide: Fanconi-associated nuclease 1 homolog (559 aa).

Positions 386, 507, 522, and 523 each coordinate Mn(2+). Residues 443 to 555 enclose the VRR-NUC domain; that stretch reads DGSYRDAIRC…MPVAVCYVRW (113 aa).

Belongs to the FAN1 family. It depends on Mn(2+) as a cofactor. Requires Mg(2+) as cofactor.

It catalyses the reaction Hydrolytically removes 5'-nucleotides successively from the 3'-hydroxy termini of 3'-hydroxy-terminated oligonucleotides.. In terms of biological role, nuclease required for the repair of DNA interstrand cross-links (ICL). Acts as a 5'-3' exonuclease that anchors at a cut end of DNA and cleaves DNA successively at every third nucleotide, allowing to excise an ICL from one strand through flanking incisions. Also has endonuclease activity toward 5'-flaps. The polypeptide is Fanconi-associated nuclease 1 homolog (Pseudomonas aeruginosa (strain ATCC 15692 / DSM 22644 / CIP 104116 / JCM 14847 / LMG 12228 / 1C / PRS 101 / PAO1)).